A 142-amino-acid polypeptide reads, in one-letter code: Large ribosomal subunit protein uL13 (142 aa).

The protein belongs to the universal ribosomal protein uL13 family. Part of the 50S ribosomal subunit.

This protein is one of the early assembly proteins of the 50S ribosomal subunit, although it is not seen to bind rRNA by itself. It is important during the early stages of 50S assembly. In Pseudoalteromonas translucida (strain TAC 125), this protein is Large ribosomal subunit protein uL13.